The chain runs to 1290 residues: Nonribosomal peptide synthetase 6 (1290 aa).

The interval 1–27 (MTAIDVPWLSTPRRDNSHGTRSNSSCQ) is disordered. Positions 260-657 (SYQELDCQAS…AQVEHHLRSC (398 aa)) are adenylation. The region spanning 775 to 851 (APETELERKL…GLAQTHRHPV (77 aa)) is the Carrier domain. Ser812 is subject to O-(pantetheine 4'-phosphoryl)serine. Residues 846 to 870 (THRHPVRRAEVPRSSHDPDPFGRVR) are disordered. Over residues 852–870 (RRAEVPRSSHDPDPFGRVR) the composition is skewed to basic and acidic residues. Positions 914–1162 (GGQLDPEQLR…PCMNIIPVRV (249 aa)) are condensation.

Belongs to the NRP synthetase family.

Functionally, nonribosomal peptide synthesis (NRPS) is a key mechanism responsible for the biosynthesis of bioactive metabolites which are potentially contributing to organismal virulence. The polypeptide is Nonribosomal peptide synthetase 6 (NRPS6) (Aspergillus fumigatus (strain ATCC MYA-4609 / CBS 101355 / FGSC A1100 / Af293) (Neosartorya fumigata)).